We begin with the raw amino-acid sequence, 385 residues long: Fe-S cluster assembly protein DRE2 (385 aa).

Positions 1 to 177 (MTSSINILLL…KKLNKNDMTI (177 aa)) are N-terminal SAM-like domain. Positions 178–240 (NVPQEIDNIT…NDLLKYNNHN (63 aa)) are linker. The interval 200–226 (YFSSDDENSSDGSLSDNANEEEEDDDE) is disordered. Positions 217-226 (ANEEEEDDDE) are enriched in acidic residues. The [2Fe-2S] cluster site is built by C261, C275, C278, and C280. Residues 261-280 (CELSLNGGKKRKKACKDCTC) are fe-S binding site A. Residues C348, C351, C359, and C362 each coordinate [4Fe-4S] cluster. Short sequence motifs (cx2C motif) lie at residues 348–351 (CGSC) and 359–362 (CDGC). The segment at 348–362 (CGSCALGDAFRCDGC) is fe-S binding site B.

This sequence belongs to the anamorsin family. As to quaternary structure, monomer. Interacts with TAH18. Interacts with MIA40. [2Fe-2S] cluster serves as cofactor. [4Fe-4S] cluster is required as a cofactor.

Its subcellular location is the cytoplasm. It localises to the mitochondrion intermembrane space. Functionally, component of the cytosolic iron-sulfur (Fe-S) protein assembly (CIA) machinery required for the maturation of extramitochondrial Fe-S proteins. Part of an electron transfer chain functioning in an early step of cytosolic Fe-S biogenesis, facilitating the de novo assembly of a [4Fe-4S] cluster on the scaffold complex CFD1-NBP35. Electrons are transferred to DRE2 from NADPH via the FAD- and FMN-containing protein TAH18. TAH18-DRE2 are also required for the assembly of the diferric tyrosyl radical cofactor of ribonucleotide reductase (RNR), probably by providing electrons for reduction during radical cofactor maturation in the catalytic small subunit RNR2. The polypeptide is Fe-S cluster assembly protein DRE2 (Candida dubliniensis (strain CD36 / ATCC MYA-646 / CBS 7987 / NCPF 3949 / NRRL Y-17841) (Yeast)).